The primary structure comprises 250 residues: Probable transcriptional regulatory protein tll0175 (250 aa).

The protein belongs to the TACO1 family.

It localises to the cytoplasm. This Thermosynechococcus vestitus (strain NIES-2133 / IAM M-273 / BP-1) protein is Probable transcriptional regulatory protein tll0175.